The primary structure comprises 575 residues: V-type ATP synthase alpha chain (575 aa).

Residue 238–245 (GPFGAGKT) participates in ATP binding.

It belongs to the ATPase alpha/beta chains family.

It carries out the reaction ATP + H2O + 4 H(+)(in) = ADP + phosphate + 5 H(+)(out). Produces ATP from ADP in the presence of a proton gradient across the membrane. The V-type alpha chain is a catalytic subunit. The polypeptide is V-type ATP synthase alpha chain (Borreliella burgdorferi (strain ZS7) (Borrelia burgdorferi)).